Reading from the N-terminus, the 183-residue chain is Ribosomal RNA small subunit methyltransferase G (183 aa).

Residues G60, F65, 111 to 112, and R125 each bind S-adenosyl-L-methionine; that span reads IE.

The protein belongs to the methyltransferase superfamily. RNA methyltransferase RsmG family.

Its subcellular location is the cytoplasm. It carries out the reaction guanosine(527) in 16S rRNA + S-adenosyl-L-methionine = N(7)-methylguanosine(527) in 16S rRNA + S-adenosyl-L-homocysteine. Specifically methylates the N7 position of guanine in position 527 of 16S rRNA. This chain is Ribosomal RNA small subunit methyltransferase G, found in Campylobacter hominis (strain ATCC BAA-381 / DSM 21671 / CCUG 45161 / LMG 19568 / NCTC 13146 / CH001A).